We begin with the raw amino-acid sequence, 723 residues long: DNA-binding protein RFX2 (723 aa).

The tract at residues 1 to 46 (MQNSEGGADSPASVALRPSAAAPPVPASPQRVLVQAASSNPKGAQM) is disordered. The span at 10-20 (SPASVALRPSA) shows a compositional bias: low complexity. Phosphoserine is present on serine 28. A DNA-binding region (RFX-type winged-helix) is located at residues 199–274 (HLQWLLDNYE…YHYYGIRLKP (76 aa)). Residues 292 to 332 (QQPMHQKPRYRPAQKTDSLGDSGSHSGLHSTPEQTMAVQSQ) are disordered. The segment covering 308–321 (DSLGDSGSHSGLHS) has biased composition (low complexity). Polar residues predominate over residues 322–332 (TPEQTMAVQSQ). At serine 416 the chain carries Phosphoserine. The interval 688-723 (MGDEQRGSEAGPDARSLGEPLVKRERSDPNHSLQGI) is disordered.

It belongs to the RFX family. Homodimer; probably only forms homodimers in testis. Heterodimer; heterodimerizes with RFX1 and RFX3.

It localises to the nucleus. It is found in the cytoplasm. Functionally, transcription factor that acts as a key regulator of spermatogenesis. Acts by regulating expression of genes required for the haploid phase during spermiogenesis, such as genes required for cilium assembly and function. Recognizes and binds the X-box, a regulatory motif with DNA sequence 5'-GTNRCC(0-3N)RGYAAC-3' present on promoters. Probably activates transcription of the testis-specific histone gene H1-6. The sequence is that of DNA-binding protein RFX2 (RFX2) from Homo sapiens (Human).